Reading from the N-terminus, the 274-residue chain is DNA damage-inducible protein D (274 aa).

The polypeptide is DNA damage-inducible protein D (dinD) (Escherichia coli (strain K12)).